The primary structure comprises 318 residues: GTP 3',8-cyclase (318 aa).

The Radical SAM core domain occupies 5–217 (KFERKIDYIR…DKIAKKYKFK (213 aa)). Residue Arg14 participates in GTP binding. Cys21 and Cys25 together coordinate [4Fe-4S] cluster. Tyr27 contributes to the S-adenosyl-L-methionine binding site. Cys28 serves as a coordination point for [4Fe-4S] cluster. A GTP-binding site is contributed by Arg64. Gly68 contacts S-adenosyl-L-methionine. Thr95 contributes to the GTP binding site. Ser119 is a binding site for S-adenosyl-L-methionine. Lys155 serves as a coordination point for GTP. Met189 contributes to the S-adenosyl-L-methionine binding site. Residues Cys248 and Cys251 each contribute to the [4Fe-4S] cluster site. 253–255 (RIR) lines the GTP pocket. Cys265 contributes to the [4Fe-4S] cluster binding site.

This sequence belongs to the radical SAM superfamily. MoaA family. Monomer and homodimer. [4Fe-4S] cluster is required as a cofactor.

It catalyses the reaction GTP + AH2 + S-adenosyl-L-methionine = (8S)-3',8-cyclo-7,8-dihydroguanosine 5'-triphosphate + 5'-deoxyadenosine + L-methionine + A + H(+). It functions in the pathway cofactor biosynthesis; molybdopterin biosynthesis. Catalyzes the cyclization of GTP to (8S)-3',8-cyclo-7,8-dihydroguanosine 5'-triphosphate. The sequence is that of GTP 3',8-cyclase from Nautilia profundicola (strain ATCC BAA-1463 / DSM 18972 / AmH).